The chain runs to 409 residues: Arginine biosynthesis bifunctional protein ArgJ (409 aa).

The substrate site is built by threonine 156, lysine 182, threonine 193, glutamate 280, asparagine 404, and serine 409. Threonine 193 (nucleophile) is an active-site residue.

It belongs to the ArgJ family. As to quaternary structure, heterotetramer of two alpha and two beta chains.

It is found in the cytoplasm. It carries out the reaction N(2)-acetyl-L-ornithine + L-glutamate = N-acetyl-L-glutamate + L-ornithine. It catalyses the reaction L-glutamate + acetyl-CoA = N-acetyl-L-glutamate + CoA + H(+). Its pathway is amino-acid biosynthesis; L-arginine biosynthesis; L-ornithine and N-acetyl-L-glutamate from L-glutamate and N(2)-acetyl-L-ornithine (cyclic): step 1/1. The protein operates within amino-acid biosynthesis; L-arginine biosynthesis; N(2)-acetyl-L-ornithine from L-glutamate: step 1/4. Functionally, catalyzes two activities which are involved in the cyclic version of arginine biosynthesis: the synthesis of N-acetylglutamate from glutamate and acetyl-CoA as the acetyl donor, and of ornithine by transacetylation between N(2)-acetylornithine and glutamate. The chain is Arginine biosynthesis bifunctional protein ArgJ from Nitrosomonas europaea (strain ATCC 19718 / CIP 103999 / KCTC 2705 / NBRC 14298).